Here is a 26-residue protein sequence, read N- to C-terminus: Stage V sporulation protein M (26 aa).

The interval Phe3–Pro9 is important for localization.

In terms of assembly, interacts with SpoIVA. May interact with the ATP-dependent protease FtsH.

It localises to the forespore outer membrane. Functionally, coordinates cortex and coat assembly during sporulation. Associates with the spore coat protein SpoIVA and with the outer forespore membrane, thereby serving as a membrane anchor that tethers SpoIVA and the entire spore coat to the forespore surface. May also serve as a competitive inhibitor of FtsH activity during sporulation. This chain is Stage V sporulation protein M, found in Bacillus subtilis (strain 168).